Here is an 87-residue protein sequence, read N- to C-terminus: Omega-lycotoxin-Am1a (87 aa).

An N-terminal signal peptide occupies residues 1 to 17 (MKLSIFFVLFFIAIAYC). The propeptide occupies 18–40 (QPEFLDDEEDEVEETLPVAEEGR). 4 disulfides stabilise this stretch: cysteine 44–cysteine 59, cysteine 51–cysteine 64, cysteine 58–cysteine 84, and cysteine 66–cysteine 82.

The protein belongs to the neurotoxin omega-lctx family. In terms of tissue distribution, expressed by the venom gland.

Its subcellular location is the secreted. In terms of biological role, modulates Cav2.1/CACNA1A voltage-gated calcium channels (P/Q-type currents) in rat cerebellar Purkinje cells and hippocampal CA1-CA3 neurons. At saturating concentrations (&gt;10 nM) decelerates activation kinetics and slightly increases peak amplitude without affecting deactivation kinetics. In vivo, does not cause death when intravenously injected into mice. In rat models, through its activity on Cav2.1/CACNA1A, has an ameliorative effect on memory defects provoked by hyperstimulation of N-methyl-D-aspartate receptors (NMDARs) in the hippocampus. The sequence is that of Omega-lycotoxin-Am1a from Alopecosa marikovskyi (Wolf spider).